The sequence spans 1255 residues: Receptor tyrosine-protein kinase erbB-2 (1255 aa).

The first 22 residues, 1–22, serve as a signal peptide directing secretion; sequence MELAALCRWGLLLALLPPGAAS. Residues 23–652 lie on the Extracellular side of the membrane; that stretch reads TQVCTGTDMK…PAEQRASPLT (630 aa). Cys26 and Cys53 are oxidised to a cystine. Asn68 and Asn124 each carry an N-linked (GlcNAc...) asparagine glycan. 16 disulfides stabilise this stretch: Cys162–Cys192, Cys195–Cys204, Cys199–Cys212, Cys220–Cys227, Cys224–Cys235, Cys236–Cys244, Cys240–Cys252, Cys255–Cys264, Cys268–Cys295, Cys299–Cys311, Cys315–Cys331, Cys334–Cys338, Cys342–Cys367, Cys475–Cys504, Cys511–Cys520, and Cys515–Cys528. Thr182 carries the phosphothreonine modification. Asn187 is a glycosylation site (N-linked (GlcNAc...) asparagine). A glycan (N-linked (GlcNAc...) asparagine) is linked at Asn259. Residue Asn530 is glycosylated (N-linked (GlcNAc...) asparagine). Intrachain disulfides connect Cys531–Cys540, Cys544–Cys560, Cys563–Cys576, Cys567–Cys584, Cys587–Cys596, Cys600–Cys623, Cys626–Cys634, and Cys630–Cys642. N-linked (GlcNAc...) asparagine glycosylation is present at Asn571. N-linked (GlcNAc...) asparagine glycosylation occurs at Asn629. The chain crosses the membrane as a helical span at residues 653–675; that stretch reads SIISAVVGILLVVVLGVVFGILI. The required for interaction with KPNB1 and EEA1 stretch occupies residues 676–689; it reads KRRQQKIRKYTMRR. The short motif at 676 to 689 is the Nuclear localization signal element; sequence KRRQQKIRKYTMRR. At 676–1255 the chain is on the cytoplasmic side; it reads KRRQQKIRKY…PEYLGLDVPV (580 aa). One can recognise a Protein kinase domain in the interval 720 to 987; sequence LRKVKVLGSG…RMARDPQRFV (268 aa). ATP is bound by residues 726–734 and Lys753; that span reads LGSGAFGTV. Catalysis depends on Asp845, which acts as the Proton acceptor. A Phosphotyrosine modification is found at Tyr877. Disordered stretches follow at residues 1035-1179 and 1196-1255; these read PAPG…GKNG and YLTP…DVPV. Phosphoserine occurs at positions 1054, 1078, 1083, and 1107. A phosphotyrosine mark is found at Tyr1112 and Tyr1139. Residues 1146-1155 are compositionally biased toward pro residues; it reads RPQPPSPREG. Position 1151 is a phosphoserine (Ser1151). Thr1166 is subject to Phosphothreonine. An interaction with PIK3C2B region spans residues 1195-1197; sequence EYL. Tyr1196 carries the phosphotyrosine modification. At Tyr1248 the chain carries Phosphotyrosine; by autocatalysis.

This sequence belongs to the protein kinase superfamily. Tyr protein kinase family. EGF receptor subfamily. Homodimer. Heterodimer with EGFR, ERBB3 and ERBB4. Part of a complex with EGFR and either PIK3C2A or PIK3C2B. May interact with PIK3C2B when phosphorylated on Tyr-1196. Interacts with PLXNB1. Interacts (when phosphorylated on Tyr-1248) with MEMO1. Interacts with MUC1; the interaction is enhanced by heregulin (HRG). Interacts (when phosphorylated on Tyr-1139) with GRB7 (via SH2 domain). Interacts (when phosphorylated on Tyr-1248) with ERBIN. Interacts with KPNB1, RANBP2, EEA1, CRM1 and CLTC. Interacts with PTK6. Interacts with RPA194 and ACTB. Interacts with PRKCABP, SRC and MYOC. Interacts (preferentially with the tyrosine phosphorylated form) with CPNE3; this interaction occurs at the cell membrane and is increased in a growth factor heregulin-dependent manner. Interacts with HSP90AA1 and HSP90AB1 in an ATP-dependent manner; the interaction suppresses ERBB2 kinase activity. Interacts with SORL1; this interaction regulates ERBB2 subcellular distribution by promoting its recycling after internalization from endosomes back to the plasma membrane, hence stimulates ERBB2-mediated signaling. Interacts with SH3BGRL. Interacts with ROR1. Autophosphorylated. Autophosphorylation occurs in trans, i.e. one subunit of the dimeric receptor phosphorylates tyrosine residues on the other subunit. Ligand-binding increases phosphorylation on tyrosine residues. Signaling via SEMA4C promotes phosphorylation at Tyr-1248. Dephosphorylated by PTPN12. Expressed in a variety of tumor tissues including primary breast tumors and tumors from small bowel, esophagus, kidney and mouth.

The protein resides in the cell membrane. The protein localises to the cell projection. It is found in the ruffle membrane. It localises to the early endosome. Its subcellular location is the cytoplasm. The protein resides in the perinuclear region. The protein localises to the nucleus. The enzyme catalyses L-tyrosyl-[protein] + ATP = O-phospho-L-tyrosyl-[protein] + ADP + H(+). Its activity is regulated as follows. Activated by dimerization. Not activated by EGF, TGF-alpha and amphiregulin. Interaction with PTK6 increases its intrinsic kinase activity. Functionally, protein tyrosine kinase that is part of several cell surface receptor complexes, but that apparently needs a coreceptor for ligand binding. Essential component of a neuregulin-receptor complex, although neuregulins do not interact with it alone. GP30 is a potential ligand for this receptor. Regulates outgrowth and stabilization of peripheral microtubules (MTs). Upon ERBB2 activation, the MEMO1-RHOA-DIAPH1 signaling pathway elicits the phosphorylation and thus the inhibition of GSK3B at cell membrane. This prevents the phosphorylation of APC and CLASP2, allowing its association with the cell membrane. In turn, membrane-bound APC allows the localization of MACF1 to the cell membrane, which is required for microtubule capture and stabilization. In terms of biological role, in the nucleus is involved in transcriptional regulation. Associates with the 5'-TCAAATTC-3' sequence in the PTGS2/COX-2 promoter and activates its transcription. Implicated in transcriptional activation of CDKN1A; the function involves STAT3 and SRC. Involved in the transcription of rRNA genes by RNA Pol I and enhances protein synthesis and cell growth. The sequence is that of Receptor tyrosine-protein kinase erbB-2 (ERBB2) from Homo sapiens (Human).